Here is a 46-residue protein sequence, read N- to C-terminus: Large ribosomal subunit protein bL36B (46 aa).

Belongs to the bacterial ribosomal protein bL36 family.

The polypeptide is Large ribosomal subunit protein bL36B (Enterobacter sp. (strain 638)).